A 183-amino-acid chain; its full sequence is Peptide deformylase (183 aa).

Residues Cys-110 and His-153 each contribute to the Fe cation site. Residue Glu-154 is part of the active site. His-157 provides a ligand contact to Fe cation.

Belongs to the polypeptide deformylase family. Fe(2+) is required as a cofactor.

The enzyme catalyses N-terminal N-formyl-L-methionyl-[peptide] + H2O = N-terminal L-methionyl-[peptide] + formate. Its function is as follows. Removes the formyl group from the N-terminal Met of newly synthesized proteins. Requires at least a dipeptide for an efficient rate of reaction. N-terminal L-methionine is a prerequisite for activity but the enzyme has broad specificity at other positions. The protein is Peptide deformylase of Listeria monocytogenes serotype 4b (strain CLIP80459).